A 68-amino-acid chain; its full sequence is uncharacterized protein (68 aa).

This is an uncharacterized protein from Caenorhabditis elegans.